Here is a 1406-residue protein sequence, read N- to C-terminus: Enhancer of mRNA-decapping protein 4 (1406 aa).

The residue at position 2 (Ala-2) is an N-acetylalanine. A phosphoserine mark is found at Ser-3 and Ser-6. Lys-125 bears the N6-acetyllysine mark. WD repeat units follow at residues 174-214 (GFTG…GKIQ), 230-277 (NHFR…SSHN), 295-334 (GHST…QDEP), and 342-393 (PHDG…CLQT). A phosphoserine mark is found at Ser-560, Ser-565, Ser-583, and Ser-585. Disordered regions lie at residues 604–631 (SLQQ…SSSS) and 667–686 (SLTL…SLLP). Low complexity predominate over residues 609-631 (SASPSSSSSSSSSSSSSSSSSSS). A phosphoserine mark is found at Ser-680, Ser-712, Ser-727, and Ser-729. Residues 719–744 (EPLGLPQASPSRTRSPDVISSASTAL) are disordered. Positions 726-744 (ASPSRTRSPDVISSASTAL) are enriched in polar residues. A Phosphothreonine modification is found at Thr-731. Phosphoserine occurs at positions 733 and 745. 2 disordered regions span residues 782–855 (HLLS…NGLQ) and 873–951 (QRDS…VAEP). Polar residues-rich tracts occupy residues 823–832 (EVATPDSQVW) and 841–852 (ETCSTLTESPRN). The residue at position 826 (Thr-826) is a Phosphothreonine. Residues Ser-849 and Ser-876 each carry the phosphoserine modification. Phosphothreonine is present on Thr-879. Phosphoserine occurs at positions 880, 884, 892, 895, and 897. Residue Thr-906 is modified to Phosphothreonine. Residues 971–1030 (HNQEELLQRLCAQLEGLQSTVTDHVERALETRHEQEQRRLERALAEGQQRGGQLQEQLTQ) are a coiled coil. Residue Ser-1385 is modified to Phosphoserine.

It belongs to the WD repeat EDC4 family. Part of a decapping complex consisting of DCP1A, DCP2, EDC3, EDC4 and probably DDX6. Part of a complex consisting of DCP1A, EDC3, EDC4 and DDX6. Part of a complex consisting of DCP1B, EDC3, EDC4 and DDX6. Interacts with DCP2. Interacts with RC3H1. Interacts with NBDY. Interacts with Tex19.1 and, probably, Tex19.2. Interacts with LSM14A. Interacts with DDX6.

It is found in the cytoplasm. The protein resides in the P-body. Its subcellular location is the nucleus. In terms of biological role, in the process of mRNA degradation, seems to play a role in mRNA decapping. Component of a complex containing DCP2 and DCP1A which functions in decapping of ARE-containing mRNAs. Promotes complex formation between DCP1A and DCP2. Enhances the catalytic activity of DCP2 (in vitro). The protein is Enhancer of mRNA-decapping protein 4 of Mus musculus (Mouse).